The following is a 597-amino-acid chain: Arginine--tRNA ligase (597 aa).

The 'HIGH' region motif lies at 138–148 (ANPTGPMHVGH).

This sequence belongs to the class-I aminoacyl-tRNA synthetase family. In terms of assembly, monomer.

Its subcellular location is the cytoplasm. It catalyses the reaction tRNA(Arg) + L-arginine + ATP = L-arginyl-tRNA(Arg) + AMP + diphosphate. The protein is Arginine--tRNA ligase of Rhodopseudomonas palustris (strain ATCC BAA-98 / CGA009).